The sequence spans 311 residues: Lipoyl synthase (311 aa).

7 residues coordinate [4Fe-4S] cluster: cysteine 47, cysteine 52, cysteine 58, cysteine 73, cysteine 77, cysteine 80, and serine 286. Positions 59 to 276 constitute a Radical SAM core domain; that stretch reads WSRHTATYLA…RSVGESLGLF (218 aa).

This sequence belongs to the radical SAM superfamily. Lipoyl synthase family. It depends on [4Fe-4S] cluster as a cofactor.

The protein resides in the cytoplasm. It catalyses the reaction [[Fe-S] cluster scaffold protein carrying a second [4Fe-4S](2+) cluster] + N(6)-octanoyl-L-lysyl-[protein] + 2 oxidized [2Fe-2S]-[ferredoxin] + 2 S-adenosyl-L-methionine + 4 H(+) = [[Fe-S] cluster scaffold protein] + N(6)-[(R)-dihydrolipoyl]-L-lysyl-[protein] + 4 Fe(3+) + 2 hydrogen sulfide + 2 5'-deoxyadenosine + 2 L-methionine + 2 reduced [2Fe-2S]-[ferredoxin]. Its pathway is protein modification; protein lipoylation via endogenous pathway; protein N(6)-(lipoyl)lysine from octanoyl-[acyl-carrier-protein]: step 2/2. Its function is as follows. Catalyzes the radical-mediated insertion of two sulfur atoms into the C-6 and C-8 positions of the octanoyl moiety bound to the lipoyl domains of lipoate-dependent enzymes, thereby converting the octanoylated domains into lipoylated derivatives. This chain is Lipoyl synthase, found in Chlamydia trachomatis serovar D (strain ATCC VR-885 / DSM 19411 / UW-3/Cx).